The primary structure comprises 355 residues: Methionine import ATP-binding protein MetN 1 (355 aa).

Residues 6–245 (IDLKDIAVTF…PKAPLTVDFV (240 aa)) form the ABC transporter domain. 42-49 (GYSGAGKS) lines the ATP pocket.

The protein belongs to the ABC transporter superfamily. Methionine importer (TC 3.A.1.24) family. As to quaternary structure, the complex is composed of two ATP-binding proteins (MetN), two transmembrane proteins (MetI) and a solute-binding protein (MetQ).

Its subcellular location is the cell membrane. The catalysed reaction is L-methionine(out) + ATP + H2O = L-methionine(in) + ADP + phosphate + H(+). It carries out the reaction D-methionine(out) + ATP + H2O = D-methionine(in) + ADP + phosphate + H(+). Functionally, part of the ABC transporter complex MetNIQ involved in methionine import. Responsible for energy coupling to the transport system. The chain is Methionine import ATP-binding protein MetN 1 from Lactiplantibacillus plantarum (strain ATCC BAA-793 / NCIMB 8826 / WCFS1) (Lactobacillus plantarum).